The following is a 296-amino-acid chain: dTDP-4-dehydrorhamnose reductase (296 aa).

NADH is bound by residues 10–12 (GQI), 35–36 (DL), and 59–61 (AYT). Residues 11-12 (QI), 35-36 (DL), and 59-61 (AYT) each bind NADPH. 100-101 (TD) contacts dTDP-beta-L-rhamnose. The NADH site is built by tyrosine 124 and lysine 128. Tyrosine 124 and lysine 128 together coordinate NADPH. The active-site Proton donor/acceptor is the tyrosine 124. Tryptophan 149 lines the dTDP-beta-L-rhamnose pocket.

It belongs to the dTDP-4-dehydrorhamnose reductase family. In terms of assembly, homodimer. The cofactor is Mg(2+).

The catalysed reaction is dTDP-beta-L-rhamnose + NADP(+) = dTDP-4-dehydro-beta-L-rhamnose + NADPH + H(+). Its pathway is carbohydrate biosynthesis; dTDP-L-rhamnose biosynthesis. Involved in the biosynthesis of the dTDP-L-rhamnose which is an important component of lipopolysaccharide (LPS). Catalyzes the reduction of dTDP-6-deoxy-L-lyxo-4-hexulose to yield dTDP-L-rhamnose. RmlD uses NADH and NADPH nearly equally well. In Sinorhizobium fredii (strain NBRC 101917 / NGR234), this protein is dTDP-4-dehydrorhamnose reductase.